The primary structure comprises 348 residues: Protein RecA (348 aa).

67-74 (GPESSGKT) is a binding site for ATP.

The protein belongs to the RecA family.

The protein localises to the cytoplasm. Can catalyze the hydrolysis of ATP in the presence of single-stranded DNA, the ATP-dependent uptake of single-stranded DNA by duplex DNA, and the ATP-dependent hybridization of homologous single-stranded DNAs. It interacts with LexA causing its activation and leading to its autocatalytic cleavage. This is Protein RecA from Kineococcus radiotolerans (strain ATCC BAA-149 / DSM 14245 / SRS30216).